A 995-amino-acid polypeptide reads, in one-letter code: uncharacterized protein (995 aa).

This is an uncharacterized protein from Caenorhabditis elegans.